The following is a 276-amino-acid chain: MTLWELFVAAILGIVEGLTEYAPVSSTGHMIIVDDIWLKSSNLMSEEAANSFKVVIQLGSILAVAIVFKDRILNLLGLKKNITSDQEQGHKLSIAQIAVGLVPAAVLGFLFEDYIDEYLFSVKTVAIGLIAGAILMLFADWVNKRKTATDTLDRISYKQAIAVGLFQCLSLWPGFSRSGSTISGGVILGLNHRAAADFTFIMAMPIMMGASFLSLVKHWDSLSSDLMPFFIVGFICAFVVALFVVRFFLRLINKIKLVPFAIYRIILGVILLLIMM.

The next 7 helical transmembrane spans lie at 48–68 (AANS…AIVF), 92–112 (LSIA…FLFE), 119–139 (LFSV…MLFA), 155–175 (ISYK…WPGF), 196–216 (ADFT…LSLV), 225–245 (DLMP…LFVV), and 255–275 (IKLV…LLIM).

The protein belongs to the UppP family.

It is found in the cell membrane. It carries out the reaction di-trans,octa-cis-undecaprenyl diphosphate + H2O = di-trans,octa-cis-undecaprenyl phosphate + phosphate + H(+). Its function is as follows. Catalyzes the dephosphorylation of undecaprenyl diphosphate (UPP). Confers resistance to bacitracin. In Bacillus subtilis (strain 168), this protein is Undecaprenyl-diphosphatase.